A 195-amino-acid chain; its full sequence is Interferon tau-9 (195 aa).

A signal peptide spans 1–23 (MAFVLSLLMALVLVSYGPGGSLG). 2 disulfide bridges follow: Cys-24–Cys-122 and Cys-52–Cys-162.

Belongs to the alpha/beta interferon family. IFN-alphaII subfamily. In terms of tissue distribution, constitutively and exclusively expressed in the mononuclear cells of the extraembryonic trophectoderm.

The protein localises to the secreted. In terms of biological role, paracrine hormone primarily responsible for maternal recognition of pregnancy. Interacts with endometrial receptors, probably type I interferon receptors, and blocks estrogen receptor expression, preventing the estrogen-induced increase in oxytocin receptor expression in the endometrium. This results in the suppression of the pulsatile endometrial release of the luteolytic hormone prostaglandin F2-alpha, hindering the regression of the corpus luteum (luteolysis) and therefore a return to ovarian cyclicity. This, and a possible direct effect of IFN-tau on prostaglandin synthesis, leads in turn to continued ovarian progesterone secretion, which stimulates the secretion by the endometrium of the nutrients required for the growth of the conceptus. In summary, displays particularly high antiviral and antiproliferative potency concurrently with particular weak cytotoxicity, high antiluteolytic activity and immunomodulatory properties. In contrast with other IFNs, IFN-tau is not virally inducible. The chain is Interferon tau-9 (IFNT9) from Ovis aries (Sheep).